We begin with the raw amino-acid sequence, 818 residues long: H(+)/Cl(-) exchange transporter 3 (818 aa).

Topologically, residues 1–125 are cytoplasmic; that stretch reads MESEQLFHRG…WEMTKSLYDA (125 aa). The short motif at 13 to 17 is the Di-leucine internalization motif; mediates targeting to late endosome and lysosome membranes element; it reads RNSYN. The IP motif; mediates targeting to recycling endosomes signature appears at 18–19; it reads SI. Short sequence motifs (di-leucine internalization motif; mediates targeting to late endosome and lysosome membranes) lie at residues 28–29, 46–47, and 71–75; these read LL and LLDLL. The helical transmembrane segment at 126–163 threads the bilayer; the sequence is WSGWLVVTLTGLASGALAGLIDIAADWMTDLKEGICLS. The N-linked (GlcNAc...) asparagine glycan is linked to Asn-177. A helical transmembrane segment spans residues 209–232; sequence MNYIMYIFWALSFAFLAVSLVKVF. The Selectivity filter part_1 signature appears at 238–242; sequence GSGIP. Ser-239 is a chloride binding site. Residues 241–248 constitute an intramembrane region (helical); it reads IPEIKTIL. The next 2 helical transmembrane spans lie at 258-276 and 282-301; these read GKWTLMIKTITLVLAVASG and EGPLVHVACCCGNIFSYLFP. The Selectivity filter part_2 motif lies at 280–284; sequence GKEGP. 2 consecutive intramembrane regions (helical) follow at residues 313–325 and 329–337; these read VLSAASAAGVSVA and PIGGVLFSL. The next 3 helical transmembrane spans lie at 349–367, 391–416, and 423–443; these read LWRSFFAALVAAFVLRSIN, FPFILLGVFGGLWGAFFIRANIAWCR, and FGKYPVLEVIIVAAITAVIAF. Residues Asn-451 and Asn-479 are each glycosylated (N-linked (GlcNAc...) asparagine). Transmembrane regions (helical) follow at residues 500–520 and 525–544; these read IWQLCLALIFKIIMTVFTFGI and GLFIPSMAIGAIAGRIVGIA. The Selectivity filter part_3 motif lies at 525 to 529; the sequence is GLFIP. Position 527 (Phe-527) interacts with chloride. Intramembrane regions (helical) lie at residues 572-586 and 590-601; these read GLYAMVGAAACLGGV and TVSLVVIVFELT. The note=Loop between two helices intramembrane region spans 602 to 605; the sequence is GGLE. Residues 606 to 624 traverse the membrane as a helical segment; it reads YIVPLMAAVMTSKWVGDAF. Over 625-818 the chain is Cytoplasmic; the sequence is GREGIYEAHI…NQDPASIMFN (194 aa). Tyr-630 is a binding site for chloride. CBS domains are found at residues 658 to 722 and 755 to 812; these read MRPR…ARKK and LDMS…NQDP. ATP is bound by residues 689-691 and 796-799; these read YNG and TKKD.

It belongs to the chloride channel (TC 2.A.49) family. ClC-3/CLCN3 subfamily. Monomer and homodimer. Forms heterodimers with CLCN4. N-glycosylated. As to expression, detected in kidney, in the apical part of proximal tubule cells (at protein level). Expressed at high levels in the kidney while a low level expression is seen in the brain. Within the brain, it is prominent in the hippocampus, cerebral cortex and olfactory bulb. Brain, pancreas, kidney, liver, lung, retina, olfactory bulb, and spinal cord. In terms of tissue distribution, pancreas, kidney, liver, lung and retina. As to expression, brain, heart, pancreas, kidney, liver, lung, retina, olfactory bulb, and spinal cord. Expressed at high levels in the liver and at low levels in the brain.

The protein resides in the cytoplasmic vesicle. It localises to the secretory vesicle membrane. It is found in the lysosome membrane. Its subcellular location is the late endosome membrane. The protein localises to the cell membrane. The protein resides in the early endosome membrane. It localises to the recycling endosome membrane. With respect to regulation, inhibited by Cd(2+). Its function is as follows. May influence large dense-core vesicle exocytosis in adrenal chromaffin cells. Strongly outwardly rectifying, electrogenic H(+)/Cl(-)exchanger which mediates the exchange of chloride ions against protons. The CLC channel family contains both chloride channels and proton-coupled anion transporters that exchange chloride or another anion for protons. The presence of conserved gating glutamate residues is typical for family members that function as antiporters. Functionally, strongly outwardly rectifying, electrogenic H(+)/Cl(-)exchanger which mediates the exchange of chloride ions against protons. Facilitates endosomal acidification and chloride accumulation in hepatocytes. In terms of biological role, strongly outwardly rectifying, electrogenic H(+)/Cl(-)exchanger which mediates the exchange of chloride ions against protons. This chain is H(+)/Cl(-) exchange transporter 3 (Clcn3), found in Mus musculus (Mouse).